The sequence spans 462 residues: 3-ketoacyl CoA thiolase 1, peroxisomal (462 aa).

The transit peptide at 1-34 directs the protein to the peroxisome; that stretch reads MEKAIQRQRVLLEHLQPIRHHTHDHSSSLTTSIC. Cys-138 (acyl-thioester intermediate) is an active-site residue. Residues His-393 and Cys-425 each act as proton acceptor in the active site. Gly-427 contacts substrate.

This sequence belongs to the thiolase-like superfamily. Thiolase family. Homodimer.

The protein localises to the peroxisome. It catalyses the reaction an acyl-CoA + acetyl-CoA = a 3-oxoacyl-CoA + CoA. It participates in aromatic compound metabolism. Its pathway is lipid metabolism; fatty acid metabolism. In terms of biological role, component of the floral volatile benzenoid/phenylpropanoid (FVBP) biosynthetic pathway. Thiolase that catalyzes the conversion of 3-oxo-3-phenylpropionyl-CoA (benzoylacetyl-CoA) to benzoyl-CoA. The protein is 3-ketoacyl CoA thiolase 1, peroxisomal of Petunia hybrida (Petunia).